The primary structure comprises 279 residues: Large ribosomal subunit protein uL2 (279 aa).

A disordered region spans residues 223 to 279 (VVMNPVDHPHGGGEGRTSGGRHPVTPWGKPTKGKRTRSNKKTDSLIMRSRHLAKKKR). Over residues 270–279 (RSRHLAKKKR) the composition is skewed to basic residues.

The protein belongs to the universal ribosomal protein uL2 family. Part of the 50S ribosomal subunit. Forms a bridge to the 30S subunit in the 70S ribosome.

Functionally, one of the primary rRNA binding proteins. Required for association of the 30S and 50S subunits to form the 70S ribosome, for tRNA binding and peptide bond formation. It has been suggested to have peptidyltransferase activity; this is somewhat controversial. Makes several contacts with the 16S rRNA in the 70S ribosome. The chain is Large ribosomal subunit protein uL2 from Rhodospirillum rubrum (strain ATCC 11170 / ATH 1.1.1 / DSM 467 / LMG 4362 / NCIMB 8255 / S1).